Reading from the N-terminus, the 448-residue chain is Solute carrier family 52, riboflavin transporter, member 3-A (448 aa).

The next 3 helical transmembrane spans lie at 11-31, 40-60, and 73-93; these read AFGL…PLIV, LPSY…LVTL, and LAIY…AVFW. An N-linked (GlcNAc...) asparagine glycan is attached at N94. A run of 2 helical transmembrane segments spans residues 107–127 and 138–158; these read AFFI…VTFL and ITTY…VALA. N-linked (GlcNAc...) asparagine glycans are attached at residues N168, N171, N175, and N194. 6 consecutive transmembrane segments (helical) span residues 198-218, 280-300, 315-335, 339-359, 376-396, and 407-427; these read EIFF…FLIL, AFIY…LPSV, LSAA…MFFP, LVFL…NMAM, AIIV…KVMV, and ALVW…IIMF.

The protein belongs to the riboflavin transporter family.

It is found in the cell membrane. The catalysed reaction is riboflavin(in) = riboflavin(out). In terms of biological role, plasma membrane transporter mediating the uptake by cells of the water soluble vitamin B2/riboflavin that plays a key role in biochemical oxidation-reduction reactions of the carbohydrate, lipid, and amino acid metabolism. The polypeptide is Solute carrier family 52, riboflavin transporter, member 3-A (slc52a3a) (Danio rerio (Zebrafish)).